The sequence spans 50 residues: uncharacterized protein (50 aa).

This is an uncharacterized protein from Sinorhizobium fredii (strain NBRC 101917 / NGR234).